The chain runs to 236 residues: Three prime repair exonuclease 2 (236 aa).

Residues Asp14 and Glu16 each coordinate Mg(2+). Substrate-binding positions include 16–17 and Tyr122; that span reads EA. The Proton donor/acceptor role is filled by His188. Residue Asp193 coordinates Mg(2+). Asp193 is a substrate binding site.

Belongs to the exonuclease superfamily. TREX family. In terms of assembly, homodimer. Requires Mg(2+) as cofactor. In terms of tissue distribution, detected in heart, breast, prostate, skeletal muscle, testis, uterus, bone marrow, colon, small intestine, stomach and thymus.

It localises to the nucleus. The catalysed reaction is Exonucleolytic cleavage in the 3'- to 5'-direction to yield nucleoside 5'-phosphates.. In terms of biological role, exonuclease with a preference for double-stranded DNA with mismatched 3' termini. May play a role in DNA repair. This Homo sapiens (Human) protein is Three prime repair exonuclease 2 (TREX2).